Consider the following 194-residue polypeptide: Protein GrpE (194 aa).

Residues 1 to 14 (MSKMNPNEKKENAS) show a composition bias toward basic and acidic residues. A disordered region spans residues 1–48 (MSKMNPNEKKENASKNENVNNEEATNLQEEQSNAADEAAGSDNVSGEV). Residues 24 to 34 (ATNLQEEQSNA) show a composition bias toward polar residues.

Belongs to the GrpE family. As to quaternary structure, homodimer.

The protein resides in the cytoplasm. In terms of biological role, participates actively in the response to hyperosmotic and heat shock by preventing the aggregation of stress-denatured proteins, in association with DnaK and GrpE. It is the nucleotide exchange factor for DnaK and may function as a thermosensor. Unfolded proteins bind initially to DnaJ; upon interaction with the DnaJ-bound protein, DnaK hydrolyzes its bound ATP, resulting in the formation of a stable complex. GrpE releases ADP from DnaK; ATP binding to DnaK triggers the release of the substrate protein, thus completing the reaction cycle. Several rounds of ATP-dependent interactions between DnaJ, DnaK and GrpE are required for fully efficient folding. The chain is Protein GrpE from Parabacteroides distasonis (strain ATCC 8503 / DSM 20701 / CIP 104284 / JCM 5825 / NCTC 11152).